The chain runs to 293 residues: Pre-mRNA-splicing factor cwf21 (293 aa).

Disordered regions lie at residues 30–52 (YDKNTNLQSNRNAKALEKRVQDP), 80–119 (SQHSTDAAASDSNTNFGTENPKPPKAIIKDEQSQSKTKSL), and 146–293 (EKGK…GEIV). Over residues 43 to 52 (KALEKRVQDP) the composition is skewed to basic and acidic residues. A CWF21 domain is found at 55-98 (SEHECRRQIESKLLLYREQLLEEVSSQHSTDAAASDSNTNFGTE). Residues 80–97 (SQHSTDAAASDSNTNFGT) are compositionally biased toward polar residues. 4 stretches are compositionally biased toward basic and acidic residues: residues 106–119 (IIKDEQSQSKTKSL), 159–186 (KRKETRGFHSKNDDDGRLEERDDLRSSV), 195–214 (RYSERKSLNSKRHVDNYNEN), and 227–259 (ELERRRSSNESYSRRSELPRRDYNRHDERERYS). Phosphoserine is present on serine 118. A phosphoserine mark is found at serine 285 and serine 286.

This sequence belongs to the CWC21 family. In terms of assembly, belongs to the 40S cdc5-associated complex (or cwf complex), a spliceosome sub-complex reminiscent of a late-stage spliceosome composed of the U2, U5 and U6 snRNAs and at least brr2, cdc5, cwf2/prp3, cwf3/syf1, cwf4/syf3, cwf5/ecm2, spp42/cwf6, cwf7/spf27, cwf8, cwf9, cwf10, cwf11, cwf12, prp45/cwf13, cwf14, cwf15, cwf16, cwf17, cwf18, cwf19, cwf20, cwf21, cwf22, cwf23, cwf24, cwf25, cwf26, cyp7/cwf27, cwf28, cwf29/ist3, lea1, msl1, prp5/cwf1, prp10, prp12/sap130, prp17, prp22, sap61, sap62, sap114, sap145, slu7, smb1, smd1, smd3, smf1, smg1 and syf2.

It is found in the cytoplasm. The protein resides in the nucleus. Functionally, involved in pre-mRNA splicing. May function at or prior to the first catalytic step of splicing at the catalytic center of the spliceosome. May do so by stabilizing the catalytic center or the position of the RNA substrate. This Schizosaccharomyces pombe (strain 972 / ATCC 24843) (Fission yeast) protein is Pre-mRNA-splicing factor cwf21 (cwf21).